The following is a 355-amino-acid chain: Probable nitronate monooxygenase (355 aa).

Residues asparagine 71, glutamine 175, glycine 180, glycine 218, and glutamine 237 to threonine 240 contribute to the FMN site.

The protein belongs to the nitronate monooxygenase family. NMO class I subfamily. It depends on FMN as a cofactor.

It catalyses the reaction 3 propionate 3-nitronate + 3 O2 + H2O = 3 3-oxopropanoate + 2 nitrate + nitrite + H2O2 + 3 H(+). Nitronate monooxygenase that uses molecular oxygen to catalyze the oxidative denitrification of alkyl nitronates. Acts on propionate 3-nitronate (P3N), the presumed physiological substrate. Probably functions in the detoxification of P3N, a metabolic poison produced by plants and fungi as a defense mechanism. The chain is Probable nitronate monooxygenase from Staphylococcus aureus (strain JH1).